The chain runs to 885 residues: Dual serine/threonine and tyrosine protein kinase (885 aa).

Positions 614–868 constitute a Protein kinase domain; it reads PKLGRELGRG…PLLGIVQPGL (255 aa). Residues 620–628 and lysine 643 each bind ATP; that span reads LGRGQYGVV. The active-site Proton acceptor is the aspartate 739.

Belongs to the protein kinase superfamily. Ser/Thr protein kinase family.

It is found in the cytoplasm. It localises to the cell membrane. The protein localises to the apical cell membrane. The protein resides in the basolateral cell membrane. Its subcellular location is the cell junction. The enzyme catalyses L-seryl-[protein] + ATP = O-phospho-L-seryl-[protein] + ADP + H(+). It catalyses the reaction L-threonyl-[protein] + ATP = O-phospho-L-threonyl-[protein] + ADP + H(+). The catalysed reaction is L-tyrosyl-[protein] + ATP = O-phospho-L-tyrosyl-[protein] + ADP + H(+). May act as a positive regulator of ERK phosphorylation downstream of fibroblast growth factor-receptor activation. May induce both caspase-dependent apoptosis and caspase-independent cell death. Plays a role in the embryonic development. The protein is Dual serine/threonine and tyrosine protein kinase (dstyk) of Danio rerio (Zebrafish).